We begin with the raw amino-acid sequence, 430 residues long: Adenylosuccinate synthetase (430 aa).

Residues 13 to 19 and 41 to 43 contribute to the GTP site; these read GDEGKGK and GHT. Asp-14 serves as the catalytic Proton acceptor. Residues Asp-14 and Gly-41 each contribute to the Mg(2+) site. IMP-binding positions include 14–17, 39–42, Thr-130, Arg-144, Gln-225, Thr-240, and Arg-304; these read DEGK and NAGH. His-42 serves as the catalytic Proton donor. 300 to 306 contributes to the substrate binding site; that stretch reads ATTGRAR. Residues Arg-306, 332–334, and 414–416 contribute to the GTP site; these read KLD and STG.

It belongs to the adenylosuccinate synthetase family. Homodimer. Mg(2+) serves as cofactor.

It localises to the cytoplasm. It carries out the reaction IMP + L-aspartate + GTP = N(6)-(1,2-dicarboxyethyl)-AMP + GDP + phosphate + 2 H(+). It participates in purine metabolism; AMP biosynthesis via de novo pathway; AMP from IMP: step 1/2. Functionally, plays an important role in the de novo pathway of purine nucleotide biosynthesis. Catalyzes the first committed step in the biosynthesis of AMP from IMP. This Pseudomonas syringae pv. tomato (strain ATCC BAA-871 / DC3000) protein is Adenylosuccinate synthetase.